The chain runs to 835 residues: Phenylalanine--tRNA ligase beta subunit (835 aa).

In terms of domain architecture, tRNA-binding spans 44 to 160 (PATTGPLVLG…ESGQPGDDAR (117 aa)). A B5 domain is found at 419-494 (PTMPSITMPV…RLEGLEAIPT (76 aa)). Residues Asp-472, Asp-478, Glu-481, and Glu-482 each contribute to the Mg(2+) site. The 94-residue stretch at 741–834 (SAFPALHQDI…AKERLGAEMR (94 aa)) folds into the FDX-ACB domain.

This sequence belongs to the phenylalanyl-tRNA synthetase beta subunit family. Type 1 subfamily. In terms of assembly, tetramer of two alpha and two beta subunits. The cofactor is Mg(2+).

The protein resides in the cytoplasm. The enzyme catalyses tRNA(Phe) + L-phenylalanine + ATP = L-phenylalanyl-tRNA(Phe) + AMP + diphosphate + H(+). This chain is Phenylalanine--tRNA ligase beta subunit, found in Corynebacterium efficiens (strain DSM 44549 / YS-314 / AJ 12310 / JCM 11189 / NBRC 100395).